The following is a 111-amino-acid chain: Universal stress protein B (111 aa).

The next 2 helical transmembrane spans lie at 1–21 (MISTFALFWALCIVCIINMAR) and 90–110 (FLLTTALCGLIVISLIAMMMW).

It belongs to the universal stress protein B family.

Its subcellular location is the cell inner membrane. This chain is Universal stress protein B, found in Pectobacterium atrosepticum (strain SCRI 1043 / ATCC BAA-672) (Erwinia carotovora subsp. atroseptica).